The sequence spans 115 residues: U3-lycotoxin-Ls1g (115 aa).

The first 20 residues, 1–20 (MKFVLLFGVFLVTLFSYSSA), serve as a signal peptide directing secretion. Residues 21 to 44 (EMLDDFDQADEDELLSLIEKEEAR) constitute a propeptide that is removed on maturation. 4 disulfides stabilise this stretch: cysteine 48-cysteine 63, cysteine 55-cysteine 72, cysteine 62-cysteine 87, and cysteine 74-cysteine 85.

It belongs to the neurotoxin 19 (CSTX) family. 01 subfamily. As to expression, expressed by the venom gland.

It is found in the secreted. The chain is U3-lycotoxin-Ls1g from Lycosa singoriensis (Wolf spider).